The chain runs to 61 residues: Large ribosomal subunit protein uL30 (61 aa).

It belongs to the universal ribosomal protein uL30 family. Part of the 50S ribosomal subunit.

The polypeptide is Large ribosomal subunit protein uL30 (Bifidobacterium adolescentis (strain ATCC 15703 / DSM 20083 / NCTC 11814 / E194a)).